The chain runs to 242 residues: tRNA (guanine-N(1)-)-methyltransferase (242 aa).

Residues Gly-111 and 130-135 contribute to the S-adenosyl-L-methionine site; that span reads IGDYVL.

It belongs to the RNA methyltransferase TrmD family. Homodimer.

The protein resides in the cytoplasm. The enzyme catalyses guanosine(37) in tRNA + S-adenosyl-L-methionine = N(1)-methylguanosine(37) in tRNA + S-adenosyl-L-homocysteine + H(+). Functionally, specifically methylates guanosine-37 in various tRNAs. The chain is tRNA (guanine-N(1)-)-methyltransferase from Aster yellows witches'-broom phytoplasma (strain AYWB).